Reading from the N-terminus, the 318-residue chain is NADH-ubiquinone oxidoreductase chain 1 (318 aa).

Helical transmembrane passes span 2–22 (FLMN…FLTL), 70–90 (MFIL…IPMP), 100–120 (LGVL…LWSG), 136–156 (VAQT…IMML), 171–191 (HLWL…STLA), 231–251 (IIMM…NPLF), 253–273 (ELFT…FLWV), and 294–314 (LPLT…LAGI).

Belongs to the complex I subunit 1 family.

It localises to the mitochondrion inner membrane. The enzyme catalyses a ubiquinone + NADH + 5 H(+)(in) = a ubiquinol + NAD(+) + 4 H(+)(out). Its function is as follows. Core subunit of the mitochondrial membrane respiratory chain NADH dehydrogenase (Complex I) that is believed to belong to the minimal assembly required for catalysis. Complex I functions in the transfer of electrons from NADH to the respiratory chain. The immediate electron acceptor for the enzyme is believed to be ubiquinone. This Priodontes maximus (Giant armadillo) protein is NADH-ubiquinone oxidoreductase chain 1 (MT-ND1).